The following is a 469-amino-acid chain: Glutamate--tRNA ligase (469 aa).

The 'HIGH' region signature appears at P11–N21. A 'KMSKS' region motif is present at residues K243 to R247. Position 246 (K246) interacts with ATP.

Belongs to the class-I aminoacyl-tRNA synthetase family. Glutamate--tRNA ligase type 1 subfamily. Monomer.

It localises to the cytoplasm. The catalysed reaction is tRNA(Glu) + L-glutamate + ATP = L-glutamyl-tRNA(Glu) + AMP + diphosphate. Its function is as follows. Catalyzes the attachment of glutamate to tRNA(Glu) in a two-step reaction: glutamate is first activated by ATP to form Glu-AMP and then transferred to the acceptor end of tRNA(Glu). In Burkholderia cenocepacia (strain HI2424), this protein is Glutamate--tRNA ligase.